A 457-amino-acid polypeptide reads, in one-letter code: Beta-1,4-mannosyltransferase egh (457 aa).

Transmembrane regions (helical) follow at residues 8–28 (LLHC…SGGI), 35–55 (FTLV…LYLL), 57–77 (FLTL…VFYN), 346–366 (LLGI…NIIF), 378–398 (VDFV…FGVI), and 415–435 (VLGA…AVIW).

It belongs to the glycosyltransferase 2 family.

Its subcellular location is the membrane. In terms of biological role, glycosyltransferase with a proposed role in glycosphingolipid biosynthesis. Neurogenic protein implicated in epithelial development. Critical component of a differential oocyte-follicle cell adhesive system. The polypeptide is Beta-1,4-mannosyltransferase egh (egh) (Drosophila melanogaster (Fruit fly)).